Here is a 537-residue protein sequence, read N- to C-terminus: Zinc finger protein 703 (537 aa).

Disordered regions lie at residues Met1–Ala38, Ser90–Val254, and Val300–Ala323. The segment covering Ser101–Leu111 has biased composition (polar residues). A compositionally biased stretch (low complexity) spans Gly149 to Lys158. Residues Ser176–Gly185 show a composition bias toward polar residues. The segment covering Cys188–Ala203 has biased composition (basic and acidic residues). The segment covering Lys205–Ala220 has biased composition (polar residues). Over residues Ser221–Ser232 the composition is skewed to low complexity. Residues His409 to His437 form a C2H2-type zinc finger.

Belongs to the Elbow/Noc family.

Its subcellular location is the nucleus. It is found in the cytoplasm. Transcriptional corepressor which does not bind directly to DNA and may regulate transcription through recruitment of histone deacetylases to gene promoters. Regulates cell adhesion, migration and proliferation. Involved in specification of the lateral neural plate border (NPB). May be required for segmental gene expression during hindbrain development. The chain is Zinc finger protein 703 (znf703) from Xenopus tropicalis (Western clawed frog).